Reading from the N-terminus, the 426-residue chain is Dihydroorotase (426 aa).

Zn(2+) contacts are provided by His-61 and His-63. Substrate is bound by residues 63-65 (HCR) and Asn-95. Residues Glu-146, His-180, His-229, and Asp-297 each contribute to the Zn(2+) site. Asp-297 is an active-site residue. His-301 contributes to the substrate binding site.

It belongs to the metallo-dependent hydrolases superfamily. DHOase family. Class I DHOase subfamily. Zn(2+) is required as a cofactor.

The catalysed reaction is (S)-dihydroorotate + H2O = N-carbamoyl-L-aspartate + H(+). It functions in the pathway pyrimidine metabolism; UMP biosynthesis via de novo pathway; (S)-dihydroorotate from bicarbonate: step 3/3. In terms of biological role, catalyzes the reversible cyclization of carbamoyl aspartate to dihydroorotate. The protein is Dihydroorotase of Methanopyrus kandleri (strain AV19 / DSM 6324 / JCM 9639 / NBRC 100938).